Consider the following 541-residue polypeptide: Carboxypeptidase Y homolog A (541 aa).

A signal peptide spans 1 to 17 (MKVATSALLIGAAAAQQ). Positions 18–125 (QQILKFPDSF…KLEQYSLRAK (108 aa)) are excised as a propeptide. Disulfide bonds link Cys-179-Cys-418, Cys-313-Cys-327, Cys-337-Cys-360, Cys-344-Cys-353, and Cys-382-Cys-388. N-linked (GlcNAc...) asparagine glycosylation is present at Asn-210. Ser-266 is a catalytic residue. The active site involves Asp-457. Residue Asn-505 is glycosylated (N-linked (GlcNAc...) asparagine). The active site involves His-516.

The protein belongs to the peptidase S10 family.

It is found in the vacuole. It carries out the reaction Release of a C-terminal amino acid with broad specificity.. Its function is as follows. Vacuolar carboxypeptidase involved in degradation of small peptides. Digests preferentially peptides containing an aliphatic or hydrophobic residue in P1' position, as well as methionine, leucine or phenylalanine in P1 position of ester substrate. In Pyrenophora tritici-repentis (strain Pt-1C-BFP) (Wheat tan spot fungus), this protein is Carboxypeptidase Y homolog A (cpyA).